The chain runs to 188 residues: Viral FLICE protein (188 aa).

2 DED domains span residues 2–74 and 93–169; these read ATYE…DLLH and PYQL…QVQT.

Interacts with host RIPK1, TRAF2, MAP3K14, IKBKB, and IKBKG. Interacts with host CADM1; this interaction is essential for chronic NF-kappa-B activation.

In terms of biological role, plays a role in the modulation of host signaling pathways by acting as an activator of both the classic and the alternative NF-kappa-B pathways. Thereby, initiates an important range of cellular processes to promote cell survival, proliferation and protection from apoptosis. This chain is Viral FLICE protein (ORF71), found in Human herpesvirus 8 type P (isolate GK18) (HHV-8).